The sequence spans 248 residues: Large ribosomal subunit protein uL10m (248 aa).

Residues 1-24 constitute a mitochondrion transit peptide; sequence MATLIQRSLSLAKSSTPALQFLRF.

Belongs to the universal ribosomal protein uL10 family. In terms of assembly, component of the mitochondrial ribosome large subunit (39S) which comprises a 16S rRNA and about 50 distinct proteins.

The protein resides in the mitochondrion. The protein is Large ribosomal subunit protein uL10m (mRpL10) of Drosophila melanogaster (Fruit fly).